A 279-amino-acid chain; its full sequence is Thymidylate synthase (279 aa).

Residue 132 to 133 (RR) participates in dUMP binding. The Nucleophile role is filled by Cys-153. DUMP contacts are provided by residues 178–181 (RSND), Asn-189, and 219–221 (HIY). Asp-181 lines the (6R)-5,10-methylene-5,6,7,8-tetrahydrofolate pocket. Ala-278 contacts (6R)-5,10-methylene-5,6,7,8-tetrahydrofolate.

It belongs to the thymidylate synthase family. Bacterial-type ThyA subfamily. In terms of assembly, homodimer.

It is found in the cytoplasm. The catalysed reaction is dUMP + (6R)-5,10-methylene-5,6,7,8-tetrahydrofolate = 7,8-dihydrofolate + dTMP. The protein operates within pyrimidine metabolism; dTTP biosynthesis. In terms of biological role, catalyzes the reductive methylation of 2'-deoxyuridine-5'-monophosphate (dUMP) to 2'-deoxythymidine-5'-monophosphate (dTMP) while utilizing 5,10-methylenetetrahydrofolate (mTHF) as the methyl donor and reductant in the reaction, yielding dihydrofolate (DHF) as a by-product. This enzymatic reaction provides an intracellular de novo source of dTMP, an essential precursor for DNA biosynthesis. In Lactococcus lactis subsp. lactis (strain IL1403) (Streptococcus lactis), this protein is Thymidylate synthase.